The sequence spans 255 residues: 5'-nucleotidase SurE (255 aa).

The a divalent metal cation site is built by Asp-13, Asp-14, Ser-44, and Asn-100.

Belongs to the SurE nucleotidase family. The cofactor is a divalent metal cation.

The protein localises to the cytoplasm. The enzyme catalyses a ribonucleoside 5'-phosphate + H2O = a ribonucleoside + phosphate. Nucleotidase that shows phosphatase activity on nucleoside 5'-monophosphates. This chain is 5'-nucleotidase SurE, found in Bacteroides fragilis (strain ATCC 25285 / DSM 2151 / CCUG 4856 / JCM 11019 / LMG 10263 / NCTC 9343 / Onslow / VPI 2553 / EN-2).